The sequence spans 37 residues: Large ribosomal subunit protein bL36 (37 aa).

It belongs to the bacterial ribosomal protein bL36 family.

This is Large ribosomal subunit protein bL36 from Aliivibrio fischeri (strain ATCC 700601 / ES114) (Vibrio fischeri).